The primary structure comprises 431 residues: Adenylosuccinate lyase (431 aa).

N(6)-(1,2-dicarboxyethyl)-AMP contacts are provided by residues 4–5, 67–69, and 93–94; these read RY, RHD, and TS. His-141 serves as the catalytic Proton donor/acceptor. Gln-212 is a binding site for N(6)-(1,2-dicarboxyethyl)-AMP. Ser-262 functions as the Proton donor/acceptor in the catalytic mechanism. Residues Ser-263, 268–270, Asn-276, and 307–311 each bind N(6)-(1,2-dicarboxyethyl)-AMP; these read KRN and SAERI.

It belongs to the lyase 1 family. Adenylosuccinate lyase subfamily. As to quaternary structure, homodimer and homotetramer. Residues from neighboring subunits contribute catalytic and substrate-binding residues to each active site.

The catalysed reaction is N(6)-(1,2-dicarboxyethyl)-AMP = fumarate + AMP. It carries out the reaction (2S)-2-[5-amino-1-(5-phospho-beta-D-ribosyl)imidazole-4-carboxamido]succinate = 5-amino-1-(5-phospho-beta-D-ribosyl)imidazole-4-carboxamide + fumarate. It functions in the pathway purine metabolism; AMP biosynthesis via de novo pathway; AMP from IMP: step 2/2. The protein operates within purine metabolism; IMP biosynthesis via de novo pathway; 5-amino-1-(5-phospho-D-ribosyl)imidazole-4-carboxamide from 5-amino-1-(5-phospho-D-ribosyl)imidazole-4-carboxylate: step 2/2. In terms of biological role, catalyzes two reactions in de novo purine nucleotide biosynthesis. Catalyzes the breakdown of 5-aminoimidazole- (N-succinylocarboxamide) ribotide (SAICAR or 2-[5-amino-1-(5-phospho-beta-D-ribosyl)imidazole-4-carboxamido]succinate) to 5-aminoimidazole-4-carboxamide ribotide (AICAR or 5-amino-1-(5-phospho-beta-D-ribosyl)imidazole-4-carboxamide) and fumarate, and of adenylosuccinate (ADS or N(6)-(1,2-dicarboxyethyl)-AMP) to adenosine monophosphate (AMP) and fumarate. The sequence is that of Adenylosuccinate lyase (purB) from Staphylococcus aureus (strain USA300).